Reading from the N-terminus, the 570-residue chain is Methyl-coenzyme M reductase subunit alpha (570 aa).

Gln161 contributes to the coenzyme F430 binding site. Residues Arg239, 270-271 (KH), and Arg284 each bind coenzyme B. A Pros-methylhistidine modification is found at His271. Arg285 bears the 5-methylarginine mark. Positions 346 and 464 each coordinate coenzyme M. Position 465 is a 1-thioglycine (Gly465). Asp470 is modified ((Z)-2,3-didehydroaspartate). Cys472 carries the post-translational modification S-methylcysteine.

This sequence belongs to the methyl-coenzyme M reductase alpha subunit family. MCR is a hexamer of two alpha, two beta, and two gamma chains, forming a dimer of heterotrimers. It depends on coenzyme F430 as a cofactor. In terms of processing, the alpha subunit contains five modified amino acids near the active site region. Is methylated on His-271, Arg-285 and Cys-472, probably by the action of specific S-adenosylmethionine-dependent methyltransferases. Also contains a thioglycine at position 465, forming a thiopeptide bond. Contains a didehydroaspartate residue at position 470. The methylation on C5 of Arg-285 is a post-translational methylation not essential in vivo, but which plays a role for the stability and structural integrity of MCR. Does not show a methylation at Gln-420, as shown for M.marburgensis.

The protein resides in the cytoplasm. It catalyses the reaction coenzyme B + methyl-coenzyme M = methane + coenzyme M-coenzyme B heterodisulfide. It functions in the pathway one-carbon metabolism; methyl-coenzyme M reduction; methane from methyl-coenzyme M: step 1/1. Component of the methyl-coenzyme M reductase (MCR) I that catalyzes the reductive cleavage of methyl-coenzyme M (CoM-S-CH3 or 2-(methylthio)ethanesulfonate) using coenzyme B (CoB or 7-mercaptoheptanoylthreonine phosphate) as reductant which results in the production of methane and the mixed heterodisulfide of CoB and CoM (CoM-S-S-CoB). This is the final step in methanogenesis. The protein is Methyl-coenzyme M reductase subunit alpha (mcrA) of Methanosarcina barkeri (strain Fusaro / DSM 804).